The chain runs to 212 residues: Adenylate kinase (212 aa).

ATP is bound at residue 10–15 (GAGKGT). Positions 30-59 (STGDMFRAAMANQTEMGRLAKSYIDKGELV) are NMP. Residues T31, R36, 57 to 59 (ELV), 86 to 89 (GYPR), and Q93 contribute to the AMP site. Residues 127–159 (GRIINRKTGETFHKVFNPPVDYKEEDYYQREDD) are LID. ATP-binding positions include R128 and 137–138 (TF). R156 and R167 together coordinate AMP. Position 195 (Q195) interacts with ATP.

Monomer.

The protein localises to the cytoplasm. The catalysed reaction is AMP + ATP = 2 ADP. Its pathway is purine metabolism; AMP biosynthesis via salvage pathway; AMP from ADP: step 1/1. Its function is as follows. Catalyzes the reversible transfer of the terminal phosphate group between ATP and AMP. Plays an important role in cellular energy homeostasis and in adenine nucleotide metabolism. The chain is Adenylate kinase from Streptococcus pyogenes serotype M6 (strain ATCC BAA-946 / MGAS10394).